A 395-amino-acid chain; its full sequence is Argininosuccinate synthase (395 aa).

8–16 (AYSGGLDTS) is a binding site for ATP. Tyrosine 86 is a binding site for L-citrulline. Glycine 116 provides a ligand contact to ATP. Residues threonine 118, asparagine 122, and aspartate 123 each coordinate L-aspartate. Asparagine 122 is an L-citrulline binding site. 5 residues coordinate L-citrulline: arginine 126, serine 173, serine 182, glutamate 257, and tyrosine 269.

Belongs to the argininosuccinate synthase family. Type 1 subfamily. Homotetramer.

Its subcellular location is the cytoplasm. The enzyme catalyses L-citrulline + L-aspartate + ATP = 2-(N(omega)-L-arginino)succinate + AMP + diphosphate + H(+). It functions in the pathway amino-acid biosynthesis; L-arginine biosynthesis; L-arginine from L-ornithine and carbamoyl phosphate: step 2/3. The polypeptide is Argininosuccinate synthase (Methanocaldococcus jannaschii (strain ATCC 43067 / DSM 2661 / JAL-1 / JCM 10045 / NBRC 100440) (Methanococcus jannaschii)).